We begin with the raw amino-acid sequence, 216 residues long: Probable transaldolase (216 aa).

Lys-83 functions as the Schiff-base intermediate with substrate in the catalytic mechanism.

This sequence belongs to the transaldolase family. Type 3B subfamily.

It is found in the cytoplasm. The enzyme catalyses D-sedoheptulose 7-phosphate + D-glyceraldehyde 3-phosphate = D-erythrose 4-phosphate + beta-D-fructose 6-phosphate. It functions in the pathway carbohydrate degradation; pentose phosphate pathway; D-glyceraldehyde 3-phosphate and beta-D-fructose 6-phosphate from D-ribose 5-phosphate and D-xylulose 5-phosphate (non-oxidative stage): step 2/3. Functionally, transaldolase is important for the balance of metabolites in the pentose-phosphate pathway. This is Probable transaldolase from Thermoanaerobacter sp. (strain X514).